We begin with the raw amino-acid sequence, 208 residues long: Protein JLP2 (208 aa).

The segment covering 185-194 has biased composition (basic residues); it reads AKKNQKKKNK. A disordered region spans residues 185–208; that stretch reads AKKNQKKKNKQSKDEVTDDMQLEV.

Belongs to the CCDC25 family.

The protein localises to the cytoplasm. This Saccharomyces cerevisiae (strain ATCC 204508 / S288c) (Baker's yeast) protein is Protein JLP2 (JLP2).